Reading from the N-terminus, the 189-residue chain is Peptidyl-tRNA hydrolase (189 aa).

Tyrosine 14 serves as a coordination point for tRNA. The active-site Proton acceptor is histidine 19. 3 residues coordinate tRNA: tyrosine 64, asparagine 66, and asparagine 112.

It belongs to the PTH family. Monomer.

Its subcellular location is the cytoplasm. The catalysed reaction is an N-acyl-L-alpha-aminoacyl-tRNA + H2O = an N-acyl-L-amino acid + a tRNA + H(+). In terms of biological role, hydrolyzes ribosome-free peptidyl-tRNAs (with 1 or more amino acids incorporated), which drop off the ribosome during protein synthesis, or as a result of ribosome stalling. Functionally, catalyzes the release of premature peptidyl moieties from peptidyl-tRNA molecules trapped in stalled 50S ribosomal subunits, and thus maintains levels of free tRNAs and 50S ribosomes. The sequence is that of Peptidyl-tRNA hydrolase from Finegoldia magna (strain ATCC 29328 / DSM 20472 / WAL 2508) (Peptostreptococcus magnus).